The following is a 354-amino-acid chain: Rhodopsin (354 aa).

Residues 1 to 36 lie on the Extracellular side of the membrane; sequence MNGTEGENFYIPMSNKTGVVRSPFDYPQYYLAEPWK. N2 and N15 each carry an N-linked (GlcNAc...) asparagine glycan. The helical transmembrane segment at 37-61 threads the bilayer; it reads FSVLAAYMFFLIIAGFPVNFLTLYV. At 62–73 the chain is on the cytoplasmic side; it reads TIQHKKLRQPLN. Residues 74–96 traverse the membrane as a helical segment; that stretch reads YILLNLAVADLFMIFGGFPSTMI. Over 97 to 110 the chain is Extracellular; that stretch reads TSMNGYFVFGPSGC. A disulfide bridge links C110 with C187. Residues 111–133 form a helical membrane-spanning segment; the sequence is NFEGFFATLGGEIGLWSLVVLAI. Residues 134-136 carry the 'Ionic lock' involved in activated form stabilization motif; it reads ERY. Topologically, residues 134–152 are cytoplasmic; the sequence is ERYVVVCKPMSNFRFGSQH. Residues 153-173 traverse the membrane as a helical segment; it reads AFMGVGLTWIMAMACAFPPLV. Over 174–202 the chain is Extracellular; the sequence is GWSRYIPEGMQCSCGIDYYTLKPEVNNES. The N-linked (GlcNAc...) asparagine glycan is linked to N200. Residues 203–224 traverse the membrane as a helical segment; sequence FVIYMFVVHFSIPLTIIFFCYG. At 225–252 the chain is on the cytoplasmic side; that stretch reads RLVCTVKEAAAQQQESETTQRAEREVTR. A helical membrane pass occupies residues 253–274; sequence MVIIMVIAFLICWLPYASVAFF. Over 275–286 the chain is Extracellular; that stretch reads IFCNQGSEFGPI. Residues 287–308 form a helical membrane-spanning segment; that stretch reads FMTIPAFFAKAASLYNPLIYIL. Residue K296 is modified to N6-(retinylidene)lysine. Residues 309-354 lie on the Cytoplasmic side of the membrane; the sequence is MNKQFRNCMITTICCGKNPFEEEESTSASASKTEASSVSSSQVAPA. Residues C322 and C323 are each lipidated (S-palmitoyl cysteine). Residues 333-354 form a disordered region; the sequence is STSASASKTEASSVSSSQVAPA. The span at 334-354 shows a compositional bias: low complexity; it reads TSASASKTEASSVSSSQVAPA.

This sequence belongs to the G-protein coupled receptor 1 family. Opsin subfamily. Phosphorylated on some or all of the serine and threonine residues present in the C-terminal region. Post-translationally, contains one covalently linked retinal chromophore.

It localises to the membrane. The protein resides in the cell projection. Its subcellular location is the cilium. The protein localises to the photoreceptor outer segment. Photoreceptor required for image-forming vision at low light intensity. While most salt water fish species use retinal as chromophore, most freshwater fish use 3-dehydroretinal, or a mixture of retinal and 3-dehydroretinal. Light-induced isomerization of 11-cis to all-trans retinal triggers a conformational change that activates signaling via G-proteins. Subsequent receptor phosphorylation mediates displacement of the bound G-protein alpha subunit by arrestin and terminates signaling. In Scyliorhinus canicula (Small-spotted catshark), this protein is Rhodopsin (rho).